The following is a 398-amino-acid chain: Acetate kinase 1 (398 aa).

N9 is a Mg(2+) binding site. K16 serves as a coordination point for ATP. Residue R89 coordinates substrate. Catalysis depends on D146, which acts as the Proton donor/acceptor. ATP-binding positions include 206–210 (HLGNG), 281–283 (DCR), and 329–333 (GIGEN). E384 is a binding site for Mg(2+).

Belongs to the acetokinase family. As to quaternary structure, homodimer. Requires Mg(2+) as cofactor. Mn(2+) serves as cofactor.

Its subcellular location is the cytoplasm. It carries out the reaction acetate + ATP = acetyl phosphate + ADP. The protein operates within metabolic intermediate biosynthesis; acetyl-CoA biosynthesis; acetyl-CoA from acetate: step 1/2. In terms of biological role, catalyzes the formation of acetyl phosphate from acetate and ATP. Can also catalyze the reverse reaction. The protein is Acetate kinase 1 of Vibrio parahaemolyticus serotype O3:K6 (strain RIMD 2210633).